The primary structure comprises 461 residues: Serine/threonine-protein kinase VHS1 (461 aa).

The region spanning 12–337 (YLITSQIGEG…KEVSSITSFT (326 aa)) is the Protein kinase domain. ATP-binding positions include 18 to 26 (IGEGAYGLV) and Lys41. Catalysis depends on Asp185, which acts as the Proton acceptor. The tract at residues 384–433 (LSYTSSSEEEDGIKEGIDDDNGSRSGSFGTLDTDTGLHSSFTSTSCESDN) is disordered. Positions 390 to 403 (SEEEDGIKEGIDDD) are enriched in acidic residues. Polar residues predominate over residues 406 to 433 (SRSGSFGTLDTDTGLHSSFTSTSCESDN).

It belongs to the protein kinase superfamily. Ser/Thr protein kinase family.

It localises to the cytoplasm. The enzyme catalyses L-seryl-[protein] + ATP = O-phospho-L-seryl-[protein] + ADP + H(+). It catalyses the reaction L-threonyl-[protein] + ATP = O-phospho-L-threonyl-[protein] + ADP + H(+). In terms of biological role, probable serine/threonine protein kinase involved in the G1-S transition. The protein is Serine/threonine-protein kinase VHS1 (VHS1) of Saccharomyces cerevisiae (strain ATCC 204508 / S288c) (Baker's yeast).